The primary structure comprises 287 residues: MSANEQWDIVSGVGITALAVAVARARESRRDDRLIDDPYAEPLIRAAQPPVPMSGDGGEAGALWHEMTDYVSVRSRFFDEWFARACAAGTRQAVVLASGLDTRAFRLEWPEGFRVFEIDQPKVLEFKDGTLAAEGVRASCERHAVAVDLRDDWASALVKAGFDPALPTAWLAEGLLPYLPPEAEANLLATVHDLSARGSRIAIESIALARSALLGADLDDTAREWGIDLKGLFSLEDRPDPGDVLAQRGWRVHRDPVGDLAAGFRRPLSDRAQQLGAAGEMVTAQRD.

Residues D119 and 148-149 each bind S-adenosyl-L-methionine; that span reads DL.

It belongs to the UPF0677 family.

Functionally, exhibits S-adenosyl-L-methionine-dependent methyltransferase activity. The polypeptide is Putative S-adenosyl-L-methionine-dependent methyltransferase SACE_1742 (Saccharopolyspora erythraea (strain ATCC 11635 / DSM 40517 / JCM 4748 / NBRC 13426 / NCIMB 8594 / NRRL 2338)).